The chain runs to 512 residues: Cytochrome P450 monooxygenase 208 (512 aa).

Residues Leu-4–Tyr-24 form a helical membrane-spanning segment. Cys-438 serves as a coordination point for heme.

Belongs to the cytochrome P450 family. It depends on heme as a cofactor.

The protein resides in the membrane. Its pathway is secondary metabolite biosynthesis. Its function is as follows. Cytochrome P450 monooxygenase that is able to use 7-ethoxycoumarin as a substrate for oxidation. The polypeptide is Cytochrome P450 monooxygenase 208 (Postia placenta (strain ATCC 44394 / Madison 698-R) (Brown rot fungus)).